A 749-amino-acid chain; its full sequence is Patatin-like phospholipase domain-containing protein AN0408 (749 aa).

A compositionally biased stretch (basic and acidic residues) spans 1-11; it reads MEKSAAGDNID. The segment at 1–21 is disordered; sequence MEKSAAGDNIDKYSPSSIPDY. Residues 92 to 112 form a helical membrane-spanning segment; the sequence is WPFLLFVLGWITFLSVGYALT. Residues 280-471 enclose the PNPLA domain; that stretch reads LCLSGGATFA…RTDIPIKALN (192 aa). The GXSXG motif lies at 311–315; it reads GTSGG. Catalysis depends on Ser-313, which acts as the Nucleophile. Asp-458 serves as the catalytic Proton acceptor. The interval 630 to 659 is disordered; the sequence is SIQPFPFDNGAAGADQKSNDPREERLNRNF. The span at 646 to 659 shows a compositional bias: basic and acidic residues; the sequence is KSNDPREERLNRNF.

It belongs to the PLPL family.

Its subcellular location is the membrane. In terms of biological role, probable lipid hydrolase. This is Patatin-like phospholipase domain-containing protein AN0408 from Emericella nidulans (strain FGSC A4 / ATCC 38163 / CBS 112.46 / NRRL 194 / M139) (Aspergillus nidulans).